The sequence spans 316 residues: Lys-63-specific deubiquitinase BRCC36 (316 aa).

Ala-2 is modified (N-acetylalanine). The MPN domain maps to 12-179; that stretch reads VHLESDAFLV…YTCFQSIQAQ (168 aa). Zn(2+)-binding residues include His-122, His-124, and Asp-135. A JAMM motif motif is present at residues 122–135; sequence HSHPHITVWPSHVD. The residue at position 258 (Ser-258) is a Phosphoserine.

This sequence belongs to the peptidase M67A family. BRCC36 subfamily. As to quaternary structure, component of the ARISC complex, at least composed of UIMC1/RAP80, ABRAXAS1, BRCC3/BRCC36, BABAM2 and BABAM1/NBA1. Component of the BRCA1-A complex, at least composed of BRCA1, BARD1, UIMC1/RAP80, ABRAXAS1, BRCC3/BRCC36, babam2 and BABAM1/NBA1. In the BRCA1-A complex, interacts directly with ABRAXAS1 and babam2. Component of the BRISC complex, at least composed of ABRAXAS2, BRCC3/BRCC36, BABAM2 and BABAM1/NBA1. Identified in a complex with SHMT2 and the other subunits of the BRISC complex. In the BRISC complex, interacts directly with ABRAXAS2. Identified in a complex with ABRAXAS2 and NUMA1. The BRISC complex interacts with the CSN complex. Component of the BRCA1/BRCA2 containing complex (BRCC), which also contains BRCA1, BRCA2, BARD1, BABAM2 and RAD51. BRCC is a ubiquitin E3 ligase complex that enhances cellular survival following DNA damage. Interacts with BRCA1. Binds polyubiquitin. Interacts with PWWP2B. Interacts with HDAC1; this interaction is enhanced in the presence of PWWP2B. The cofactor is Zn(2+). As to expression, heart, brain, placenta, lung, liver, skeletal muscle, kidney and pancreas. Aberrantly expressed in the vast majority of breast tumors.

Its subcellular location is the nucleus. It localises to the cytoplasm. It is found in the cytoskeleton. The protein resides in the spindle pole. Metalloprotease that specifically cleaves 'Lys-63'-linked polyubiquitin chains. Does not have activity toward 'Lys-48'-linked polyubiquitin chains. Component of the BRCA1-A complex, a complex that specifically recognizes 'Lys-63'-linked ubiquitinated histones H2A and H2AX at DNA lesions sites, leading to target the BRCA1-BARD1 heterodimer to sites of DNA damage at double-strand breaks (DSBs). In the BRCA1-A complex, it specifically removes 'Lys-63'-linked ubiquitin on histones H2A and H2AX, antagonizing the RNF8-dependent ubiquitination at double-strand breaks (DSBs). Catalytic subunit of the BRISC complex, a multiprotein complex that specifically cleaves 'Lys-63'-linked ubiquitin in various substrates. Mediates the specific 'Lys-63'-specific deubiquitination associated with the COP9 signalosome complex (CSN), via the interaction of the BRISC complex with the CSN complex. The BRISC complex is required for normal mitotic spindle assembly and microtubule attachment to kinetochores via its role in deubiquitinating NUMA1. Plays a role in interferon signaling via its role in the deubiquitination of the interferon receptor IFNAR1; deubiquitination increases IFNAR1 activity by enhancing its stability and cell surface expression. Acts as a regulator of the NLRP3 inflammasome by mediating deubiquitination of NLRP3, leading to NLRP3 inflammasome assembly. Down-regulates the response to bacterial lipopolysaccharide (LPS) via its role in IFNAR1 deubiquitination. Deubiquitinates HDAC1 and PWWP2B leading to their stabilization. The polypeptide is Lys-63-specific deubiquitinase BRCC36 (BRCC3) (Homo sapiens (Human)).